Here is a 284-residue protein sequence, read N- to C-terminus: 2-dehydro-3-deoxyphosphooctonate aldolase (284 aa).

This sequence belongs to the KdsA family.

The protein resides in the cytoplasm. It carries out the reaction D-arabinose 5-phosphate + phosphoenolpyruvate + H2O = 3-deoxy-alpha-D-manno-2-octulosonate-8-phosphate + phosphate. It functions in the pathway carbohydrate biosynthesis; 3-deoxy-D-manno-octulosonate biosynthesis; 3-deoxy-D-manno-octulosonate from D-ribulose 5-phosphate: step 2/3. The protein operates within bacterial outer membrane biogenesis; lipopolysaccharide biosynthesis. The protein is 2-dehydro-3-deoxyphosphooctonate aldolase of Escherichia fergusonii (strain ATCC 35469 / DSM 13698 / CCUG 18766 / IAM 14443 / JCM 21226 / LMG 7866 / NBRC 102419 / NCTC 12128 / CDC 0568-73).